The sequence spans 530 residues: Alkyl hydroperoxide reductase subunit F (530 aa).

214–229 (DVLVVGGGPAGSAAAV) contributes to the FAD binding site. C344 and C347 are oxidised to a cystine. An NAD(+)-binding site is contributed by 356–370 (RVAVIGGGNSGVEAA). Residue 477 to 487 (TDVPGVFAAGD) participates in FAD binding.

This sequence belongs to the class-II pyridine nucleotide-disulfide oxidoreductase family. Homodimer. Requires FAD as cofactor.

In terms of biological role, serves to protect the cell against DNA damage by alkyl hydroperoxides. It can use either NADH or NADPH as electron donor for direct reduction of redox dyes or of alkyl hydroperoxides when combined with the AhpC protein. This is Alkyl hydroperoxide reductase subunit F (ahpF) from Xanthomonas campestris pv. phaseoli.